The primary structure comprises 712 residues: Amino-acid acetyltransferase, mitochondrial (712 aa).

Residues 1 to 47 (MFVRTCRSSCNAWTNATSTTQAGSLLPPNAHRSVVLTLSLQACSART) constitute a mitochondrion transit peptide. Positions 55-99 (FASTTSQSKRQEAEAEEKRQVSPRLGPSAPRSSYPSSAEARQKRD) are disordered. Basic and acidic residues predominate over residues 63–74 (KRQEAEAEEKRQ). Over residues 81 to 93 (PSAPRSSYPSSAE) the composition is skewed to low complexity. Positions 534 to 702 (GVPRLRLTDT…YEDVCRNIAP (169 aa)) constitute an N-acetyltransferase domain.

The protein belongs to the acetyltransferase family.

The protein localises to the mitochondrion. It catalyses the reaction L-glutamate + acetyl-CoA = N-acetyl-L-glutamate + CoA + H(+). Its pathway is amino-acid biosynthesis; L-arginine biosynthesis; N(2)-acetyl-L-ornithine from L-glutamate: step 1/4. Its activity is regulated as follows. Inhibited by arginine. In terms of biological role, N-acetylglutamate synthase involved in arginine biosynthesis. The polypeptide is Amino-acid acetyltransferase, mitochondrial (arg-14) (Neurospora crassa (strain ATCC 24698 / 74-OR23-1A / CBS 708.71 / DSM 1257 / FGSC 987)).